Reading from the N-terminus, the 172-residue chain is Adenine phosphoribosyltransferase (172 aa).

Belongs to the purine/pyrimidine phosphoribosyltransferase family. As to quaternary structure, homodimer.

Its subcellular location is the cytoplasm. The catalysed reaction is AMP + diphosphate = 5-phospho-alpha-D-ribose 1-diphosphate + adenine. It participates in purine metabolism; AMP biosynthesis via salvage pathway; AMP from adenine: step 1/1. Functionally, catalyzes a salvage reaction resulting in the formation of AMP, that is energically less costly than de novo synthesis. The polypeptide is Adenine phosphoribosyltransferase (Polynucleobacter asymbioticus (strain DSM 18221 / CIP 109841 / QLW-P1DMWA-1) (Polynucleobacter necessarius subsp. asymbioticus)).